Reading from the N-terminus, the 377-residue chain is RIB43A-like with coiled-coils protein 2 (377 aa).

A coiled-coil region spans residues 217–246 (NKNQVVELTERKRQEKQQEQEDNMTEITNL). The tract at residues 354–377 (KQMNTASSSQPTEDYFSQFNTRSR) is disordered.

This sequence belongs to the RIB43A family. As to quaternary structure, microtubule inner protein component of sperm flagellar doublet microtubules.

It is found in the cytoplasm. Its subcellular location is the cytoskeleton. It localises to the cilium axoneme. The protein resides in the flagellum axoneme. Microtubule inner protein (MIP) part of the dynein-decorated doublet microtubules (DMTs) in cilia axoneme, which is required for motile cilia beating. This chain is RIB43A-like with coiled-coils protein 2, found in Mus musculus (Mouse).